Here is an 807-residue protein sequence, read N- to C-terminus: Ribosome-releasing factor 2, mitochondrial (807 aa).

The transit peptide at 1–18 (MFCRKYAFQTWKQFSRFY) directs the protein to the mitochondrion. The tr-type G domain occupies 27–315 (SKTRNIGIIA…GITKYLPSPL (289 aa)). GTP-binding positions include 36–43 (AHIDAGKT), 100–104 (DTPGH), and 154–157 (NKMD).

It belongs to the TRAFAC class translation factor GTPase superfamily. Classic translation factor GTPase family. EF-G/EF-2 subfamily.

It is found in the mitochondrion. In terms of biological role, mitochondrial GTPase that mediates the disassembly of ribosomes from messenger RNA at the termination of mitochondrial protein biosynthesis. Not involved in the GTP-dependent ribosomal translocation step during translation elongation. The sequence is that of Ribosome-releasing factor 2, mitochondrial from Candida dubliniensis (strain CD36 / ATCC MYA-646 / CBS 7987 / NCPF 3949 / NRRL Y-17841) (Yeast).